A 338-amino-acid chain; its full sequence is Methionine synthase (338 aa).

Histidine 211, cysteine 213, and cysteine 294 together coordinate Zn(2+).

This sequence belongs to the archaeal MetE family. Requires Zn(2+) as cofactor.

Its pathway is amino-acid biosynthesis; L-methionine biosynthesis via de novo pathway. In terms of biological role, catalyzes the transfer of a methyl group to L-homocysteine resulting in methionine formation. The physiological methyl donor is unknown. The chain is Methionine synthase from Sulfurisphaera tokodaii (strain DSM 16993 / JCM 10545 / NBRC 100140 / 7) (Sulfolobus tokodaii).